The sequence spans 349 residues: Probable dual-specificity RNA methyltransferase RlmN (349 aa).

Glu-94 (proton acceptor) is an active-site residue. The Radical SAM core domain occupies 100–324; it reads YKTHTSICLS…NKNNVNTTIR (225 aa). Cys-107 and Cys-335 form a disulfide bridge. Positions 114, 118, and 121 each coordinate [4Fe-4S] cluster. S-adenosyl-L-methionine-binding positions include 161–162, Ser-193, 216–218, and Asn-292; these read GE and SLH. The S-methylcysteine intermediate role is filled by Cys-335.

This sequence belongs to the radical SAM superfamily. RlmN family. [4Fe-4S] cluster serves as cofactor.

The protein resides in the cytoplasm. The catalysed reaction is adenosine(2503) in 23S rRNA + 2 reduced [2Fe-2S]-[ferredoxin] + 2 S-adenosyl-L-methionine = 2-methyladenosine(2503) in 23S rRNA + 5'-deoxyadenosine + L-methionine + 2 oxidized [2Fe-2S]-[ferredoxin] + S-adenosyl-L-homocysteine. It carries out the reaction adenosine(37) in tRNA + 2 reduced [2Fe-2S]-[ferredoxin] + 2 S-adenosyl-L-methionine = 2-methyladenosine(37) in tRNA + 5'-deoxyadenosine + L-methionine + 2 oxidized [2Fe-2S]-[ferredoxin] + S-adenosyl-L-homocysteine. Functionally, specifically methylates position 2 of adenine 2503 in 23S rRNA and position 2 of adenine 37 in tRNAs. This chain is Probable dual-specificity RNA methyltransferase RlmN, found in Finegoldia magna (strain ATCC 29328 / DSM 20472 / WAL 2508) (Peptostreptococcus magnus).